The following is a 588-amino-acid chain: Protein gamma response 1 (588 aa).

Coiled coils occupy residues 64 to 104 (AACD…LGKT) and 164 to 281 (SEVK…KTVV). Basic and acidic residues-rich tracts occupy residues 377 to 389 (KHSE…DKVR), 465 to 484 (NVKR…KKDD), and 508 to 525 (TSKK…KAER). 2 disordered regions span residues 377–398 (KHSE…SGNN) and 417–525 (PIVR…KAER).

In terms of tissue distribution, basal levels in mitotically dividing cells (meristems), and high levels in endoreduplicating cells (stipules, trichomes) (at protein level).

The protein localises to the nucleus. Functionally, seems to mediate cell cycle arrest before mitosis in response to DNA damage. Is probably also involved in the transition from mitosis to endoreduplication. This chain is Protein gamma response 1 (GR1), found in Arabidopsis thaliana (Mouse-ear cress).